Consider the following 76-residue polypeptide: cAMP-dependent protein kinase inhibitor alpha (76 aa).

Thr-2 is subject to N-acetylthreonine. Residues 49–76 are disordered; it reads KTEGEDDGQRSSTEQSGEAQGEAAKSES.

Belongs to the PKI family. Present at high levels in skeletal muscle and brain but is present at lower levels in heart, testis and liver.

Extremely potent competitive inhibitor of cAMP-dependent protein kinase activity, this protein interacts with the catalytic subunit of the enzyme after the cAMP-induced dissociation of its regulatory chains. The protein is cAMP-dependent protein kinase inhibitor alpha (Pkia) of Mus musculus (Mouse).